Consider the following 118-residue polypeptide: Small ribosomal subunit protein uS13 (118 aa).

A disordered region spans residues 93-118 (RNLPVRGQRSKTNARTRKGPRKPIKR).

It belongs to the universal ribosomal protein uS13 family. In terms of assembly, part of the 30S ribosomal subunit. Forms a loose heterodimer with protein S19. Forms two bridges to the 50S subunit in the 70S ribosome.

In terms of biological role, located at the top of the head of the 30S subunit, it contacts several helices of the 16S rRNA. In the 70S ribosome it contacts the 23S rRNA (bridge B1a) and protein L5 of the 50S subunit (bridge B1b), connecting the 2 subunits; these bridges are implicated in subunit movement. Contacts the tRNAs in the A and P-sites. The sequence is that of Small ribosomal subunit protein uS13 from Saccharophagus degradans (strain 2-40 / ATCC 43961 / DSM 17024).